A 234-amino-acid polypeptide reads, in one-letter code: Orotidine 5'-phosphate decarboxylase (234 aa).

Substrate-binding positions include Asp-10, Lys-32, 59 to 68, Thr-119, Arg-180, Gln-189, Gly-209, and Arg-210; that span reads DLKFHDIPNT. Residue Lys-61 is the Proton donor of the active site.

Belongs to the OMP decarboxylase family. Type 1 subfamily. In terms of assembly, homodimer.

It catalyses the reaction orotidine 5'-phosphate + H(+) = UMP + CO2. The protein operates within pyrimidine metabolism; UMP biosynthesis via de novo pathway; UMP from orotate: step 2/2. Its function is as follows. Catalyzes the decarboxylation of orotidine 5'-monophosphate (OMP) to uridine 5'-monophosphate (UMP). The protein is Orotidine 5'-phosphate decarboxylase of Mannheimia succiniciproducens (strain KCTC 0769BP / MBEL55E).